We begin with the raw amino-acid sequence, 301 residues long: Ribonuclease Z (301 aa).

Histidine 63, histidine 65, aspartate 67, histidine 68, histidine 141, aspartate 204, and histidine 262 together coordinate Zn(2+). Aspartate 67 serves as the catalytic Proton acceptor.

This sequence belongs to the RNase Z family. As to quaternary structure, homodimer. Zn(2+) is required as a cofactor.

The catalysed reaction is Endonucleolytic cleavage of RNA, removing extra 3' nucleotides from tRNA precursor, generating 3' termini of tRNAs. A 3'-hydroxy group is left at the tRNA terminus and a 5'-phosphoryl group is left at the trailer molecule.. Functionally, zinc phosphodiesterase, which displays some tRNA 3'-processing endonuclease activity. Probably involved in tRNA maturation, by removing a 3'-trailer from precursor tRNA. This chain is Ribonuclease Z, found in Streptomyces avermitilis (strain ATCC 31267 / DSM 46492 / JCM 5070 / NBRC 14893 / NCIMB 12804 / NRRL 8165 / MA-4680).